A 522-amino-acid polypeptide reads, in one-letter code: Paraspeckle component 1 (522 aa).

At methionine 1 the chain carries N-acetylmethionine. RRM domains lie at 81-153 and 155-236; these read CRLF…FATH and AALT…PMEQ. A sufficient for paraspeckles localization region spans residues 124 to 357; sequence ESRTLAEIAK…QLRHEEEHRR (234 aa). Positions 230-357 are sufficient for perinucleolar caps localization and interaction with NONO; sequence IVEPMEQFDD…QLRHEEEHRR (128 aa). Residues 282 to 376 adopt a coiled-coil conformation; that stretch reads DEMEKQQREQ…EQEELRRQQE (95 aa). Residues serine 408, serine 472, and serine 476 each carry the phosphoserine modification. The interval 459–522 is disordered; it reads GAVHNDRFPQ…FEGPNKRRRY (64 aa). The segment covering 471 to 489 has biased composition (polar residues); sequence PSQMGSPMGNRTGSETPQA. A compositionally biased stretch (gly residues) spans 497-513; that stretch reads VSGGPGGFGRGSQGGNF. The residue at position 506 (arginine 506) is an Omega-N-methylarginine. A Phosphoserine modification is found at serine 508.

This sequence belongs to the PSPC family. In terms of assembly, forms heterodimers with NONO; this involves formation of a coiled coil domain by helices from both proteins. Found in a RNP complex with CAT2 transcribed nuclear RNA (CTN-RNA). Interaction with NONO is required for its targeting to paraspeckles and perinucleolar caps. Interacts with SFPQ. Part of the HDP-RNP complex composed of at least HEXIM1, PRKDC, XRCC5, XRCC6, paraspeckle proteins (SFPQ, NONO, PSPC1, RBM14, and MATR3) and NEAT1 RNA. Interacts with ALKBH5 (when acetylated); interaction with acetylated ALKBH5 facilitates recognition of N(6)-methyladenosine (m6A) RNAs.

Its subcellular location is the nucleus speckle. It is found in the nucleus. It localises to the nucleolus. The protein resides in the nucleus matrix. The protein localises to the cytoplasm. Functionally, RNA-binding protein required for the formation of nuclear paraspeckles. Binds to poly(A), poly(G) and poly(U) RNA homopolymers. Regulates, cooperatively with NONO and SFPQ, androgen receptor-mediated gene transcription activity in Sertoli cell line. Regulates the circadian clock by repressing the transcriptional activator activity of the CLOCK-BMAL1 heterodimer. Plays a role in the regulation of DNA virus-mediated innate immune response by assembling into the HDP-RNP complex, a complex that serves as a platform for IRF3 phosphorylation and subsequent innate immune response activation through the cGAS-STING pathway. The chain is Paraspeckle component 1 (Pspc1) from Rattus norvegicus (Rat).